The primary structure comprises 702 residues: Putative GMC-type oxidoreductase R135 (702 aa).

A helical transmembrane segment spans residues 55–75 (LTGDIVIIGAGAAGSLLAHYL). 58–88 (DIVIIGAGAAGSLLAHYLARFSNMKIILLEA) lines the FAD pocket. Residue His628 is part of the active site.

This sequence belongs to the GMC oxidoreductase family. It depends on FAD as a cofactor.

The protein localises to the virion. Its subcellular location is the host membrane. The polypeptide is Putative GMC-type oxidoreductase R135 (Acanthamoeba polyphaga (Amoeba)).